The following is a 292-amino-acid chain: Pyruvate formate-lyase 2-activating enzyme (292 aa).

The Radical SAM core domain maps to 33–287 (NDGEGIRTVV…REMAERAGLQ (255 aa)). Residues Cys47, Cys51, and Cys54 each coordinate [4Fe-4S] cluster. 53 to 55 (WCA) lines the S-adenosyl-L-methionine pocket. In terms of domain architecture, 4Fe-4S ferredoxin-type spans 62-96 (GKIQTVRREAKCLHCAKCLRDADECPSGAFERIGR). S-adenosyl-L-methionine is bound by residues Gly126, 175–177 (DLK), and His247.

The protein belongs to the organic radical-activating enzymes family. The cofactor is [4Fe-4S] cluster.

It is found in the cytoplasm. The catalysed reaction is glycyl-[formate C-acetyltransferase] + reduced [flavodoxin] + S-adenosyl-L-methionine = glycin-2-yl radical-[formate C-acetyltransferase] + semiquinone [flavodoxin] + 5'-deoxyadenosine + L-methionine + H(+). In terms of biological role, activation of pyruvate formate-lyase 2 under anaerobic conditions by generation of an organic free radical, using S-adenosylmethionine and reduced flavodoxin as cosubstrates to produce 5'-deoxy-adenosine. In Escherichia coli (strain K12), this protein is Pyruvate formate-lyase 2-activating enzyme (pflC).